Here is a 522-residue protein sequence, read N- to C-terminus: Glutamate--cysteine ligase (522 aa).

Belongs to the glutamate--cysteine ligase type 1 family. Type 1 subfamily.

It catalyses the reaction L-cysteine + L-glutamate + ATP = gamma-L-glutamyl-L-cysteine + ADP + phosphate + H(+). Its pathway is sulfur metabolism; glutathione biosynthesis; glutathione from L-cysteine and L-glutamate: step 1/2. In Vibrio parahaemolyticus serotype O3:K6 (strain RIMD 2210633), this protein is Glutamate--cysteine ligase.